The sequence spans 216 residues: Large ribosomal subunit protein uL3 (216 aa).

The interval 119–143 (GYQGNIHKDGQSRGPMAHGSRYHRR) is disordered.

The protein belongs to the universal ribosomal protein uL3 family. Part of the 50S ribosomal subunit. Forms a cluster with proteins L14 and L19.

In terms of biological role, one of the primary rRNA binding proteins, it binds directly near the 3'-end of the 23S rRNA, where it nucleates assembly of the 50S subunit. In Levilactobacillus brevis (strain ATCC 367 / BCRC 12310 / CIP 105137 / JCM 1170 / LMG 11437 / NCIMB 947 / NCTC 947) (Lactobacillus brevis), this protein is Large ribosomal subunit protein uL3.